Reading from the N-terminus, the 235-residue chain is 15,16-dihydrobiliverdin:ferredoxin oxidoreductase (235 aa).

This sequence belongs to the HY2 family.

It catalyses the reaction 15,16-dihydrobiliverdin + oxidized 2[4Fe-4S]-[ferredoxin] = biliverdin IXalpha + reduced 2[4Fe-4S]-[ferredoxin] + 2 H(+). Catalyzes the two-electron reduction of biliverdin IX-alpha at the C15 methine bridge. This chain is 15,16-dihydrobiliverdin:ferredoxin oxidoreductase, found in Synechococcus sp. (strain CC9605).